Reading from the N-terminus, the 434-residue chain is Methylenetetrahydrofolate--tRNA-(uracil-5-)-methyltransferase TrmFO (434 aa).

10–15 (GAGLAG) contributes to the FAD binding site.

Belongs to the MnmG family. TrmFO subfamily. It depends on FAD as a cofactor.

It localises to the cytoplasm. It catalyses the reaction uridine(54) in tRNA + (6R)-5,10-methylene-5,6,7,8-tetrahydrofolate + NADH + H(+) = 5-methyluridine(54) in tRNA + (6S)-5,6,7,8-tetrahydrofolate + NAD(+). The enzyme catalyses uridine(54) in tRNA + (6R)-5,10-methylene-5,6,7,8-tetrahydrofolate + NADPH + H(+) = 5-methyluridine(54) in tRNA + (6S)-5,6,7,8-tetrahydrofolate + NADP(+). Functionally, catalyzes the folate-dependent formation of 5-methyl-uridine at position 54 (M-5-U54) in all tRNAs. The polypeptide is Methylenetetrahydrofolate--tRNA-(uracil-5-)-methyltransferase TrmFO (Bacillus mycoides (strain KBAB4) (Bacillus weihenstephanensis)).